The primary structure comprises 1099 residues: Sterol regulatory element-binding protein 2 (1099 aa).

Residues 1-47 (MDASEFMDTMDPSLSELGDEFTLGDIDEMLQFVSNQVDFPDIFEDQM) form a transcriptional activation (acidic) region. Over 1 to 461 (MDASEFMDTM…SCVGVMDRSR (461 aa)) the chain is Cytoplasmic. The tract at residues 65 to 107 (LTPPHTPVQTSSQTHTQTLTQAHTQTHTQTHTQTRTPPVLQPR) is disordered. Low complexity predominate over residues 71–100 (PVQTSSQTHTQTLTQAHTQTHTQTHTQTRT). In terms of domain architecture, bHLH spans 320–370 (ERRTTHNIIEKRYRSSINDKILELRDLVLGNDAKMHKSGVLRKAIDYIKYL). Residues 370–391 (LQQVNHKLRQENLTLKMANQKN) are leucine-zipper. A helical transmembrane segment spans residues 462–482 (LLLCALSFLCLSLNPLPSLLG). Topologically, residues 483 to 513 (AEAPAGSPEVAGHGPTRTLFSLPAQTQSFGA) are lumenal. The chain crosses the membrane as a helical span at residues 514–534 (WLWCVLPFLLVWVVSGVGVVW). Residues 535–1099 (GCVRVLYLWE…LSGGTTIAAS (565 aa)) lie on the Cytoplasmic side of the membrane.

Belongs to the SREBP family. As to quaternary structure, forms a tight complex with scap, the SCAP-SREBP complex, in the endoplasmic reticulum membrane. Homodimer; efficient DNA binding of the soluble transcription factor fragment requires dimerization with another bHLH protein. Processed in the Golgi apparatus, releasing the protein from the membrane. At low cholesterol the SCAP-SREBP complex is recruited into COPII vesicles for export from the endoplasmic reticulum. In the Golgi, complex SREBPs are cleaved sequentially by site-1 (mbtps1, S1P) and site-2 (mbtps2, S2P) protease. The first cleavage by site-1 protease occurs within the luminal loop, the second cleavage by site-2 protease occurs within the first transmembrane domain, releasing the transcription factor from the Golgi membrane.

Its subcellular location is the endoplasmic reticulum membrane. The protein localises to the golgi apparatus membrane. It localises to the cytoplasmic vesicle. The protein resides in the COPII-coated vesicle membrane. It is found in the nucleus. Functionally, precursor of the transcription factor form (Processed sterol regulatory element-binding protein 2), which is embedded in the endoplasmic reticulum membrane. Low sterol concentrations promote processing of this form, releasing the transcription factor form that translocates into the nucleus and activates transcription of genes involved in cholesterol biosynthesis. In terms of biological role, key transcription factor that regulates expression of genes involved in cholesterol biosynthesis. Binds to the sterol regulatory element 1 (SRE-1) (5'-ATCACCCCAC-3'). Has dual sequence specificity binding to both an E-box motif (5'-ATCACGTGA-3') and to SRE-1 (5'-ATCACCCCAC-3'). Regulates transcription of genes related to cholesterol synthesis pathway. Activated by mediated cholesterol efflux, transactivates NOTCH and promotes hematopoietic stem and progenitor cell emergence. The protein is Sterol regulatory element-binding protein 2 of Danio rerio (Zebrafish).